The following is a 151-amino-acid chain: Putative pre-16S rRNA nuclease (151 aa).

This sequence belongs to the YqgF nuclease family.

The protein localises to the cytoplasm. Could be a nuclease involved in processing of the 5'-end of pre-16S rRNA. The polypeptide is Putative pre-16S rRNA nuclease (Myxococcus xanthus (strain DK1622)).